A 143-amino-acid chain; its full sequence is MAKKKVVTQIKLQCPAGKATPAPPIGPALGPHGVSAPQFVQQFNDRTKSMEPGLVIPVVITVYADKSFTFILKTPPASVLIKKACKIEKGSATSVTAKVGKLSKAALEEIAKTKMPDINANDIEAAKKIIAGTARSMGVEVER.

It belongs to the universal ribosomal protein uL11 family. Part of the ribosomal stalk of the 50S ribosomal subunit. Interacts with L10 and the large rRNA to form the base of the stalk. L10 forms an elongated spine to which L12 dimers bind in a sequential fashion forming a multimeric L10(L12)X complex. Post-translationally, one or more lysine residues are methylated.

Functionally, forms part of the ribosomal stalk which helps the ribosome interact with GTP-bound translation factors. This is Large ribosomal subunit protein uL11 from Treponema denticola (strain ATCC 35405 / DSM 14222 / CIP 103919 / JCM 8153 / KCTC 15104).